A 372-amino-acid chain; its full sequence is UDP-N-acetylglucosamine--N-acetylmuramyl-(pentapeptide) pyrophosphoryl-undecaprenol N-acetylglucosamine transferase (372 aa).

Residues 16–18, N128, R164, S192, I250, and Q295 each bind UDP-N-acetyl-alpha-D-glucosamine; that span reads TGG.

It belongs to the glycosyltransferase 28 family. MurG subfamily.

The protein localises to the cell inner membrane. The catalysed reaction is di-trans,octa-cis-undecaprenyl diphospho-N-acetyl-alpha-D-muramoyl-L-alanyl-D-glutamyl-meso-2,6-diaminopimeloyl-D-alanyl-D-alanine + UDP-N-acetyl-alpha-D-glucosamine = di-trans,octa-cis-undecaprenyl diphospho-[N-acetyl-alpha-D-glucosaminyl-(1-&gt;4)]-N-acetyl-alpha-D-muramoyl-L-alanyl-D-glutamyl-meso-2,6-diaminopimeloyl-D-alanyl-D-alanine + UDP + H(+). It participates in cell wall biogenesis; peptidoglycan biosynthesis. In terms of biological role, cell wall formation. Catalyzes the transfer of a GlcNAc subunit on undecaprenyl-pyrophosphoryl-MurNAc-pentapeptide (lipid intermediate I) to form undecaprenyl-pyrophosphoryl-MurNAc-(pentapeptide)GlcNAc (lipid intermediate II). This chain is UDP-N-acetylglucosamine--N-acetylmuramyl-(pentapeptide) pyrophosphoryl-undecaprenol N-acetylglucosamine transferase, found in Paraburkholderia xenovorans (strain LB400).